The chain runs to 840 residues: Lysine-specific demethylase JMJ27 (840 aa).

The segment covering 1 to 10 has biased composition (basic residues); it reads MEKMRGKRIR. Residues 1-52 are disordered; that stretch reads MEKMRGKRIRPRDSGELVEDGRSESERKTRKKENDVVSKGRIGRGRGRGEVS. Residues 11–38 show a composition bias toward basic and acidic residues; that stretch reads PRDSGELVEDGRSESERKTRKKENDVVS. 8 residues coordinate Zn(2+): C80, C83, C95, C98, C104, C107, C124, and C127. The RING-type; degenerate zinc-finger motif lies at 80 to 127; it reads CHHCKILTSESDLIFCSKCNKKCYCFDCIKRSYSERTHEEVRAACPFC. Residues 502–798 enclose the JmjC domain; sequence PKSGILNLAT…ECLRLTQEFR (297 aa). Residues H546 and D548 each contribute to the Fe cation site. Positions 594–678 are disordered; it reads KEASELENKS…ETDGNTNERS (85 aa). A compositionally biased stretch (basic and acidic residues) spans 595–620; the sequence is EASELENKSMKEVDESKKDLKDKAAN. Over residues 621 to 631 the composition is skewed to polar residues; that stretch reads EEQSNNSSRPS. Residues 635-646 are compositionally biased toward basic and acidic residues; sequence EAEKVIISKEDN. The segment covering 647–659 has biased composition (polar residues); the sequence is PTQPAVSTSVESI. Over residues 660-678 the composition is skewed to basic and acidic residues; that stretch reads QEQKLDAPKETDGNTNERS. H766 serves as a coordination point for Fe cation.

The protein belongs to the JARID1 histone demethylase family. Interacts with RPN1A. Fe(2+) serves as cofactor. In terms of tissue distribution, expressed in seedlings, inflorescences, flowers and siliques, and, at low levels, in roots, leaves (including vascular bundles) and stems. Particularly observed in stomatal guard cells.

It localises to the nucleus. It is found in the cytoplasm. The catalysed reaction is N(6),N(6)-dimethyl-L-lysyl(9)-[histone H3] + 2-oxoglutarate + O2 = N(6)-methyl-L-lysyl(9)-[histone H3] + formaldehyde + succinate + CO2. It carries out the reaction N(6)-methyl-L-lysyl(9)-[histone H3] + 2-oxoglutarate + O2 = L-lysyl(9)-[histone H3] + formaldehyde + succinate + CO2. It catalyses the reaction N(6),N(6)-dimethyl-L-lysyl(9)-[histone H3] + 2 2-oxoglutarate + 2 O2 = L-lysyl(9)-[histone H3] + 2 formaldehyde + 2 succinate + 2 CO2. Functionally, histone demethylase that demethylates 'Lys-9' (H3K9me) of histone H3 with a specific activity for H3K9me1 and H3K9me2. No activity on H3K4, H3K27, H3K36, H3R2 and H4R3 methyl marks, but weak activity on H3K9me3. Involved in regulation of gene expression. Regulates flowering time by repressing the major flowering regulator CONSTANS (CO) and promoting FLOWERING LOCUS C (FLC). Exhibits a positive impact on abscisic acid- (ABA), hydrogen peroxide- (H(2)O(2)) and calcium- (Ca(2+)) induced stomatal closure. Promotes stomatal-closure-dependent drought-stress responses through its histone demethylase activity toward at least GOLS2 and RD20 loci, thus protecting them from silencing by removing H3K9me2 marks in drought conditions. Required for plant defenses leading to resistance against the virulent bacterial pathogen Pseudomonas syringae pv. tomato DC3000 (Pst DC3000) via a negative regulation of WRKY25 (a repressor of defense) and by triggering the expression of several pathogenesis-related (PR) proteins (e.g. PR1, PR3, PR4 and PR5). The polypeptide is Lysine-specific demethylase JMJ27 (Arabidopsis thaliana (Mouse-ear cress)).